The sequence spans 322 residues: MKTSRRGRALLAVALNLLALLFATTAFLTTYWCQGTQRVPKPGCGQGGGANCPNSGANATANSTAAPVAASPAGAPYSWEAGDERFQLRRFHTGIWYSCEEELGGPGEKCRSFIDLAPASEKGVLWLSVVSEVLYILLLVVGFSLMCLELVHSSSVIDGLKLNAFAAVFTVLSGLLGMVAHMMYTQVFQVTVSLGPEDWRPHSWDYGWSFCLAWGSFTCCMAASVTTLNSYTKTVIEFRHKRKVFEQGYREEPTFIDPEAIKYFRERIEKGDVSEEEDFRLACRHERYPTRHQPHMGDSWPRSSAHEAAELNRQCWVLGHWV.

Residues 1–8 (MKTSRRGR) are Cytoplasmic-facing. A helical transmembrane segment spans residues 9 to 29 (ALLAVALNLLALLFATTAFLT). At 30 to 122 (TYWCQGTQRV…FIDLAPASEK (93 aa)) the chain is on the extracellular side. A helical membrane pass occupies residues 123-143 (GVLWLSVVSEVLYILLLVVGF). The Cytoplasmic portion of the chain corresponds to 144–163 (SLMCLELVHSSSVIDGLKLN). Residues 164-184 (AFAAVFTVLSGLLGMVAHMMY) form a helical membrane-spanning segment. At 185–207 (TQVFQVTVSLGPEDWRPHSWDYG) the chain is on the extracellular side. The chain crosses the membrane as a helical span at residues 208–228 (WSFCLAWGSFTCCMAASVTTL). The Cytoplasmic portion of the chain corresponds to 229 to 322 (NSYTKTVIEF…RQCWVLGHWV (94 aa)). Serine 274 is modified (phosphoserine).

It belongs to the GSG1 family. Component of the inner core of AMPAR complexes. AMPAR complexes consist of an inner core made of 4 pore-forming GluA/GRIA proteins (GRIA1, GRIA2, GRIA3 and GRIA4) and 4 major auxiliary subunits arranged in a twofold symmetry. One of the two pairs of distinct binding sites is occupied either by CNIH2, CNIH3 or CACNG2, CACNG3. The other harbors CACNG2, CACNG3, CACNG4, CACNG8 or GSG1L. This inner core of AMPAR complexes is complemented by outer core constituents binding directly to the GluA/GRIA proteins at sites distinct from the interaction sites of the inner core constituents. Outer core constituents include at least PRRT1, PRRT2, CKAMP44/SHISA9, FRRS1L and NRN1. The proteins of the inner and outer core serve as a platform for other, more peripherally associated AMPAR constituents. Alone or in combination, these auxiliary subunits control the gating and pharmacology of the AMPAR complexes and profoundly impact their biogenesis and protein processing. As to expression, expressed in the brain, including hippocampus (at protein level).

The protein resides in the cell membrane. It is found in the synapse. As a component of the inner core of AMPAR complexes, modifies AMPA receptor (AMPAR) gating. This is Germ cell-specific gene 1-like protein (Gsg1l) from Mus musculus (Mouse).